The sequence spans 445 residues: UDP-N-acetylmuramoylalanine--D-glutamate ligase (445 aa).

117-123 serves as a coordination point for ATP; that stretch reads GSNGKTT.

It belongs to the MurCDEF family.

The protein resides in the cytoplasm. The catalysed reaction is UDP-N-acetyl-alpha-D-muramoyl-L-alanine + D-glutamate + ATP = UDP-N-acetyl-alpha-D-muramoyl-L-alanyl-D-glutamate + ADP + phosphate + H(+). It participates in cell wall biogenesis; peptidoglycan biosynthesis. In terms of biological role, cell wall formation. Catalyzes the addition of glutamate to the nucleotide precursor UDP-N-acetylmuramoyl-L-alanine (UMA). The polypeptide is UDP-N-acetylmuramoylalanine--D-glutamate ligase (Neisseria gonorrhoeae (strain NCCP11945)).